We begin with the raw amino-acid sequence, 492 residues long: N-succinylglutamate 5-semialdehyde dehydrogenase (492 aa).

220–225 is an NAD(+) binding site; that stretch reads GSASTG. Active-site residues include Glu243 and Cys277.

The protein belongs to the aldehyde dehydrogenase family. AstD subfamily.

The catalysed reaction is N-succinyl-L-glutamate 5-semialdehyde + NAD(+) + H2O = N-succinyl-L-glutamate + NADH + 2 H(+). It participates in amino-acid degradation; L-arginine degradation via AST pathway; L-glutamate and succinate from L-arginine: step 4/5. In terms of biological role, catalyzes the NAD-dependent reduction of succinylglutamate semialdehyde into succinylglutamate. The chain is N-succinylglutamate 5-semialdehyde dehydrogenase from Salmonella agona (strain SL483).